Reading from the N-terminus, the 209-residue chain is Large ribosomal subunit protein uL3 (209 aa).

Residue Gln-150 is modified to N5-methylglutamine.

Belongs to the universal ribosomal protein uL3 family. Part of the 50S ribosomal subunit. Forms a cluster with proteins L14 and L19. Methylated by PrmB.

In terms of biological role, one of the primary rRNA binding proteins, it binds directly near the 3'-end of the 23S rRNA, where it nucleates assembly of the 50S subunit. The polypeptide is Large ribosomal subunit protein uL3 (Vibrio parahaemolyticus serotype O3:K6 (strain RIMD 2210633)).